A 428-amino-acid polypeptide reads, in one-letter code: Putative aminotransferase MSMEG_6286/MSMEI_6121 (428 aa).

Residue glycine 37 coordinates substrate. Residues tyrosine 72, 102 to 105, asparagine 191, 222 to 225, and 256 to 258 contribute to the pyridoxal 5'-phosphate site; these read ASLE, AYAV, and STS. Lysine 339 is covalently cross-linked (Isoglutamyl lysine isopeptide (Lys-Gln) (interchain with Q-Cter in protein Pup)).

The protein belongs to the class-I pyridoxal-phosphate-dependent aminotransferase family. The cofactor is pyridoxal 5'-phosphate.

In Mycolicibacterium smegmatis (strain ATCC 700084 / mc(2)155) (Mycobacterium smegmatis), this protein is Putative aminotransferase MSMEG_6286/MSMEI_6121.